The chain runs to 163 residues: Probable ribosome biogenesis protein RLP24 (163 aa).

This sequence belongs to the eukaryotic ribosomal protein eL24 family. As to quaternary structure, associated with nucleolar and cytoplasmic pre-60S particles. At the end of biogenesis it dissociates from cytoplasmic pre-60S particles and is likely to be exchanged for its ribosomal homolog, RPL24.

Its subcellular location is the nucleus. The protein resides in the nucleolus. In terms of biological role, involved in the biogenesis of the 60S ribosomal subunit. Ensures the docking of GTPBP4/NOG1 to pre-60S particles. This Rattus norvegicus (Rat) protein is Probable ribosome biogenesis protein RLP24 (Rsl24d1).